The primary structure comprises 506 residues: Vinckepain-1 (506 aa).

Residues 1–32 (MSDNIGQINFTIPGIQSLDENDTYLKINHKKT) are Cytoplasmic-facing. The propeptide at 1–262 (MSDNIGQINF…LISVDNKSKD (262 aa)) is activation peptide. Residues 33–53 (IKICAYAITAIALFFIGGVFF) traverse the membrane as a helical; Signal-anchor for type II membrane protein segment. The Lumenal segment spans residues 54-506 (KNQAKINALD…VGSDVFFPIY (453 aa)). Residues Asn-133 and Asn-258 are each glycosylated (N-linked (GlcNAc...) asparagine). 4 cysteine pairs are disulfide-bonded: Cys-284–Cys-326, Cys-319–Cys-359, Cys-344–Cys-364, and Cys-413–Cys-495. Cys-287 is a catalytic residue. An N-linked (GlcNAc...) asparagine glycan is attached at Asn-418. Active-site residues include His-419 and Asn-470.

This sequence belongs to the peptidase C1 family.

It is found in the membrane. Its function is as follows. Cysteine protease. The protein is Vinckepain-1 of Plasmodium vinckei.